We begin with the raw amino-acid sequence, 345 residues long: Aspartate--ammonia ligase (345 aa).

It belongs to the class-II aminoacyl-tRNA synthetase family. AsnA subfamily.

It is found in the cytoplasm. It catalyses the reaction L-aspartate + NH4(+) + ATP = L-asparagine + AMP + diphosphate + H(+). It functions in the pathway amino-acid biosynthesis; L-asparagine biosynthesis; L-asparagine from L-aspartate (ammonia route): step 1/1. The polypeptide is Aspartate--ammonia ligase (Parabacteroides distasonis (strain ATCC 8503 / DSM 20701 / CIP 104284 / JCM 5825 / NCTC 11152)).